The chain runs to 251 residues: MLFDSHLHLDQLSDENIQQTLAHSKIIGMLAVSTNLNSAKKLLNLKQTYPKKLYIAAGFHPEQQLPSLEEQKKLFQWIDEHHSSISAIGEVGLPHYSKRENPNLDYVPYIELLERFILIAKKWDLPLNLHIVHNDVEIALELLQKHNIQRAHFHWFKTDEKSFQKFFSTPYFASLTPDILWNSKTQYVAQHLSLNRLMIETDSPWQHEGFERAGISEQLLAVLQKLAELKSLPLHSVQKQILLNTQQFYRL.

Positions 6, 8, 90, 130, 154, and 202 each coordinate a divalent metal cation.

Belongs to the metallo-dependent hydrolases superfamily. TatD-type hydrolase family. The cofactor is a divalent metal cation.

This is an uncharacterized protein from Haemophilus influenzae (strain ATCC 51907 / DSM 11121 / KW20 / Rd).